The primary structure comprises 356 residues: Protein SEC13 homolog (356 aa).

6 WD repeats span residues 11 to 50, 54 to 95, 101 to 142, 149 to 205, 210 to 253, and 259 to 298; these read EHEDMVHHAALDFYGLLLATCSSDGSVRIFHSRKNNKALA, GHQG…DWTK, NHDS…GVWD, AHTI…WVEE, AHSD…SEWT, and TFDDAVWSISWSTTGNILAVTGGDNNVTLWKENTEGQWIR. The segment at 307–356 is disordered; it reads IQSKQPSHLPHSHSQQQQALQQHQQQAPSHPGPSSDSEHSSNLSNSQLSN. Low complexity predominate over residues 308-356; it reads QSKQPSHLPHSHSQQQQALQQHQQQAPSHPGPSSDSEHSSNLSNSQLSN.

This sequence belongs to the WD repeat SEC13 family. Probable component of the nuclear pore complex (NPC). Component of the GATOR complex consisting of mio, Nup44A/Seh1, Im11, Nplr3, Nplr2, Wdr24, Wdr59 and Sec13. Within the GATOR complex, probable component of the GATOR2 subcomplex which is likely composed of mio, Nup44A/Seh1, Wdr24, Wdr59 and Sec13. Interacts with msk. Interacts (preferentially when phosphorylated) with Mad. The GATOR2 complex associates with unmet in the absence of S-adenosyl-L-methionine; the mio-Wdr24-Nup44A subcomplex is essential and sufficient for this interaction while Wdr59 and Sec13 are dispensable. This association acts as a nutrient sensor to inhibit mTORC1 signaling in the absence of methionine. Salivary glands.

It localises to the nucleus envelope. The protein localises to the nucleus. It is found in the nucleoplasm. The protein resides in the cytoplasm. Its subcellular location is the cytoskeleton. It localises to the microtubule organizing center. The protein localises to the centrosome. It is found in the nuclear pore complex. The protein resides in the cytoplasmic vesicle. Its subcellular location is the COPII-coated vesicle membrane. It localises to the endoplasmic reticulum membrane. The protein localises to the lysosome membrane. In terms of biological role, functions as a component of the nuclear pore complex (NPC) and the COPII coat. At the endoplasmic reticulum, SEC13 is involved in the biogenesis of COPII-coated vesicles. Recruited to transcriptionally active chromatin at the time of transcription initiation by RNA polymerase II. Required for proper expression of ecdysone-responsive genes such as Eip74EF and Eip75B during larval development. Required for reactivation of transcription after heat shock. Required for nuclear import of phosphorylated Mad via importin msk. Has no role in classical nuclear localization signal (cNLS)-dependent nuclear import via importin-beta. A component of the GATOR subcomplex GATOR2 which functions as an activator of the amino acid-sensing branch of the mTORC1 signaling pathway. The two GATOR subcomplexes, GATOR1 and GATOR2, regulate the mTORC1 pathway in order to mediate metabolic homeostasis, female gametogenesis and the response to amino acid limitation and complete starvation. GATOR2 activates the mTORC1 signaling pathway through the inhibition of the GATOR1 subcomplex, controlling the switch to cell proliferation and growth under nutrient replete conditions and during female oocyte development. The protein is Protein SEC13 homolog of Drosophila melanogaster (Fruit fly).